The chain runs to 698 residues: Polyribonucleotide nucleotidyltransferase (698 aa).

Asp490 and Asp496 together coordinate Mg(2+). A KH domain is found at 557-616 (PKVVTMTIKPDKIRDVIGPGGKKINEIIDETGVKLDIEQDGTIFIGAVDQAMINRAREII). An S1 motif domain is found at 626 to 694 (GQTYQATVKR…KQGRVNASHR (69 aa)).

The protein belongs to the polyribonucleotide nucleotidyltransferase family. Mg(2+) is required as a cofactor.

It is found in the cytoplasm. It carries out the reaction RNA(n+1) + phosphate = RNA(n) + a ribonucleoside 5'-diphosphate. Its function is as follows. Involved in mRNA degradation. Catalyzes the phosphorolysis of single-stranded polyribonucleotides processively in the 3'- to 5'-direction. This Staphylococcus aureus (strain MSSA476) protein is Polyribonucleotide nucleotidyltransferase.